An 80-amino-acid polypeptide reads, in one-letter code: Serine rich endogenous peptide 15 (80 aa).

The first 28 residues, 1 to 28 (MSKEKSYVIALLLSLLLCLSFQVGVSEA), serve as a signal peptide directing secretion. Short sequence motifs (SCOOP motif) lie at residues 32–46 (AVTT…CANG) and 66–80 (PRVA…GKGP). Residues 37-80 (YSDSPRCANGSSASPPTRHCPRGRPRPPTPRVAVHSNSTKGKGP) are disordered. Short sequence motifs (sxS motif essential for MIK2 binding) lie at residues 38–40 (SDS) and 72–74 (SNS). Residues 71-80 (HSNSTKGKGP) show a composition bias toward polar residues.

Belongs to the serine rich endogenous peptide (SCOOP) phytocytokine family. As to quaternary structure, interacts with MIK2 (via extracellular leucine-rich repeat domain); this interaction triggers the formation of complex between MIK2 and the BAK1/SERK3 and SERK4 coreceptors, and subsequent BAK1 activation by phosphorylation. In terms of tissue distribution, mostly expressed in leaves, and, to a lower extent, in seedlings shoots, roots, stems, siliques, seeds and flowers.

The protein resides in the cell membrane. Its subcellular location is the secreted. The protein localises to the extracellular space. It is found in the apoplast. It localises to the endoplasmic reticulum. The protein resides in the golgi apparatus. In terms of biological role, brassicaceae-specific phytocytokine (plant endogenous peptide released into the apoplast) perceived by MIK2 in a BAK1/SERK3 and SERK4 coreceptors-dependent manner, that modulates various physiological and antimicrobial processes including growth prevention and reactive oxygen species (ROS) response regulation. Inhibits root growth. The protein is Serine rich endogenous peptide 15 of Arabidopsis thaliana (Mouse-ear cress).